Consider the following 384-residue polypeptide: MRMGTPVPGTLLILLAASQGQTQTCPGSHSLRYFYTALSRPAISEPWYIAVGYLDDTQFVRFNSSGETATYKLSAPWVEQEGPEYWARETEIVTSNAQFFRENLQTMLDYYNLSQNGSHTIQVMYGCEVEFFGSLFRAYEQHGYDGPDYIALNEDLKTWTAADTAAEITRSKWEQAGYTELRRTYLEGPCKDSLLRYLENRKKTQECTDPPKTHVTHHPRPEGYVTLRCWALRFYPADITLTWQLNGEELIQDTELVETRPAGDGTFQKWAAVVVPLGKEQKYTCHVYHEGLPEPLTLRWEPPQTSMPNRTTVRALLGAMIILGFMSGSVMMWMRKNNGGNGDDNTAAYQNEREHLSLDPRAESEALGVEAGMKDLPSAPPLVS.

Positions 1–26 (MRMGTPVPGTLLILLAASQGQTQTCP) are cleaved as a signal peptide. An alpha-1 region spans residues 27–116 (GSHSLRYFYT…MLDYYNLSQN (90 aa)). Residues 27-314 (GSHSLRYFYT…TSMPNRTTVR (288 aa)) are Extracellular-facing. Residues Asn-63, Asn-112, and Asn-116 are each glycosylated (N-linked (GlcNAc...) asparagine). An alpha-2 region spans residues 117–208 (GSHTIQVMYG…ENRKKTQECT (92 aa)). 2 disulfide bridges follow: Cys-127–Cys-190 and Cys-229–Cys-285. The alpha-3 stretch occupies residues 209 to 300 (DPPKTHVTHH…GLPEPLTLRW (92 aa)). Residues 211 to 299 (PKTHVTHHPR…EGLPEPLTLR (89 aa)) form the Ig-like C1-type domain. The connecting peptide stretch occupies residues 301-314 (EPPQTSMPNRTTVR). Asn-309 carries an N-linked (GlcNAc...) asparagine glycan. A helical membrane pass occupies residues 315–334 (ALLGAMIILGFMSGSVMMWM). Topologically, residues 335–384 (RKNNGGNGDDNTAAYQNEREHLSLDPRAESEALGVEAGMKDLPSAPPLVS) are cytoplasmic. Positions 354 to 364 (EHLSLDPRAES) are enriched in basic and acidic residues. Residues 354–384 (EHLSLDPRAESEALGVEAGMKDLPSAPPLVS) form a disordered region.

Belongs to the MHC class I family. As to quaternary structure, heterodimer of an alpha chain and a beta chain (beta-2-microglobulin). As to expression, TL antigens are only expressed on thymocytes, activated T-lymphocytes and on some thymic leukemias.

The protein localises to the membrane. In terms of biological role, involved in the presentation of foreign antigens to the immune system. This is H-2 class I histocompatibility antigen, TLA(B) alpha chain (H2-T3) from Mus musculus (Mouse).